The chain runs to 332 residues: Protoheme IX farnesyltransferase (332 aa).

7 helical membrane-spanning segments follow: residues 63-83 (LICT…LNCL), 109-129 (TVFL…ISGV), 132-152 (LAAG…TIIL), 160-180 (IVFG…AATG), 188-208 (WLFS…AILL), 245-265 (ILGV…LLPF), and 286-306 (AKGL…LLLI).

It belongs to the UbiA prenyltransferase family. Protoheme IX farnesyltransferase subfamily.

The protein resides in the cell inner membrane. It catalyses the reaction heme b + (2E,6E)-farnesyl diphosphate + H2O = Fe(II)-heme o + diphosphate. It functions in the pathway porphyrin-containing compound metabolism; heme O biosynthesis; heme O from protoheme: step 1/1. In terms of biological role, converts heme B (protoheme IX) to heme O by substitution of the vinyl group on carbon 2 of heme B porphyrin ring with a hydroxyethyl farnesyl side group. The polypeptide is Protoheme IX farnesyltransferase (Prochlorococcus marinus subsp. pastoris (strain CCMP1986 / NIES-2087 / MED4)).